The following is an 846-amino-acid chain: Translation initiation factor IF-2 (846 aa).

Positions 198-219 (YKREEEEKKSKAKKAGGKGFKK) are disordered. Positions 207 to 219 (SKAKKAGGKGFKK) are enriched in basic residues. The tr-type G domain maps to 345–512 (SRAPVVTIMG…AVLLQSEVLE (168 aa)). The segment at 354 to 361 (GHVDHGKT) is G1. 354 to 361 (GHVDHGKT) contributes to the GTP binding site. Positions 379-383 (GITQH) are G2. The segment at 400–403 (DTPG) is G3. GTP is bound by residues 400 to 404 (DTPGH) and 454 to 457 (NKID). The interval 454-457 (NKID) is G4. Residues 490–492 (SAK) are G5.

It belongs to the TRAFAC class translation factor GTPase superfamily. Classic translation factor GTPase family. IF-2 subfamily.

The protein localises to the cytoplasm. One of the essential components for the initiation of protein synthesis. Protects formylmethionyl-tRNA from spontaneous hydrolysis and promotes its binding to the 30S ribosomal subunits. Also involved in the hydrolysis of GTP during the formation of the 70S ribosomal complex. This is Translation initiation factor IF-2 from Francisella tularensis subsp. holarctica (strain OSU18).